Reading from the N-terminus, the 324-residue chain is Disintegrin-like/cysteine-rich protein MPIII-3 (324 aa).

An N-terminal signal peptide occupies residues 1–20 (MIQVLLVIICLAVFPYQVSS). Residues 21–173 (IILESGNINN…DEDPKKCEFR (153 aa)) constitute a propeptide, or 174 (in a minor form). The region spanning 168–207 (KKCEFRRAGTECRPARSECDVAEYCTGQSAECPTDVFHSN) is the Disintegrin; truncated domain. The interval 179 to 192 (CRPARSECDVAEYC) is inhibits platelet aggregation. Cystine bridges form between Cys-179/Cys-199, Cys-186/Cys-218, Cys-192/Cys-199, Cys-211/Cys-223, Cys-230/Cys-280, Cys-245/Cys-287, Cys-258/Cys-268, Cys-275/Cys-312, and Cys-306/Cys-317. Residues 185 to 187 (ECD) carry the D/ECD-tripeptide motif. Ca(2+)-binding residues include Asp-187 and Glu-190. Positions 202 and 203 each coordinate Ca(2+). N-linked (GlcNAc...) asparagine glycosylation occurs at Asn-237.

The protein belongs to the venom metalloproteinase (M12B) family. P-III subfamily. P-IIIe sub-subfamily. As to quaternary structure, monomer. Is able to form a homodimer. In terms of processing, N-glycosylated. Exists in at least six differently N-glycosylated forms. The glycans likely have a stabilizing purpose. Cys-199 forms a disulfide bond with Cys-192 in 90% and with Cys-179 in 10% of the protein molecules; alternative disulfide bonds may have a major effect on the conformation of the protein. In terms of tissue distribution, expressed by the venom gland (at protein level). Expressed by the venom gland.

It localises to the secreted. Activity may be regulated by the intramolecular thiol-disulfide exchange or disulfide bond switching. Its function is as follows. Abolishes platelet aggregation induced by collagen, ADP (IC(50)=292 nM) and arachidonic-acid. The inhibition of collagen-induced platelet aggregation may be due to its ability to bind collagen and block the binding site on collagen for platelets and/or to its ability to bind to the platelet alpha-2/beta-1 collagen receptor (ITGA2/ITGB1) to block its interaction with collagen and hence prevent platelet stimulation. The inhibition of ADP- or arachidonic-acid-induced platelet aggregation may be due to it acting as an antagonist of the ADP receptors or thromboxane-prostanoid receptors of the platelets, respectively. Does not interact with integrins alpha-IIb (ITGA2B) or beta-3 (ITGB3) nor platelet glycoproteins VI (GP6) or IX (GP9) in vitro, however, the detection is dependent on experimental conditions and may happen in vivo. Able to bind to platelet glycoprotein Ib alpha chain (GP1BA) receptor in vitro, although this interaction may have pathologically only limited effect in vivo as it is not able to abolish the von Willebrand factor (vWF)-dependent platelet agglutination induced by ristocetin. Does not affect blood coagulation. The protein is Disintegrin-like/cysteine-rich protein MPIII-3 of Vipera ammodytes ammodytes (Western sand viper).